The primary structure comprises 478 residues: Trigger factor (478 aa).

Basic and acidic residues predominate over residues 154–167 (MAKDSRSFEPREEG). Disordered stretches follow at residues 154 to 173 (MAKD…AQSG) and 444 to 478 (LFAE…KAAG). In terms of domain architecture, PPIase FKBP-type spans 173–258 (GDRVTIDFVG…VKAVAAPGET (86 aa)).

It belongs to the FKBP-type PPIase family. Tig subfamily.

Its subcellular location is the cytoplasm. The enzyme catalyses [protein]-peptidylproline (omega=180) = [protein]-peptidylproline (omega=0). Involved in protein export. Acts as a chaperone by maintaining the newly synthesized protein in an open conformation. Functions as a peptidyl-prolyl cis-trans isomerase. The protein is Trigger factor of Methylorubrum populi (strain ATCC BAA-705 / NCIMB 13946 / BJ001) (Methylobacterium populi).